Reading from the N-terminus, the 271-residue chain is Metal-staphylopine import system ATP-binding protein CntD (271 aa).

The ABC transporter domain occupies 6-251 (VKHLTITDTW…PEHVYTKYLL (246 aa)). 38 to 45 (GESGSGKS) provides a ligand contact to ATP.

This sequence belongs to the ABC transporter superfamily. As to quaternary structure, the complex is composed of two ATP-binding proteins (CntD and CntF), two transmembrane proteins (CntB and CntC) and a solute-binding protein (CntA).

It localises to the cell membrane. Part of the ABC transporter complex CntABCDF (Opp1) involved in the uptake of metal in complex with the metallophore staphylopine (StP). May be involved in the import of a large array of divalent metals ions such as nickel, cobalt, zinc, copper and iron. Probably responsible for energy coupling to the transport system. This Staphylococcus aureus (strain Mu50 / ATCC 700699) protein is Metal-staphylopine import system ATP-binding protein CntD.